The primary structure comprises 1405 residues: DNA-directed RNA polymerase subunit beta' (1405 aa).

Zn(2+)-binding residues include C70, C72, C85, and C88. 3 residues coordinate Mg(2+): D460, D462, and D464. Zn(2+) contacts are provided by C815, C890, C897, and C900. Residues 1375–1405 (GLTDSEMETLSGKPAGAEPVAALADAGADEE) are disordered.

Belongs to the RNA polymerase beta' chain family. The RNAP catalytic core consists of 2 alpha, 1 beta, 1 beta' and 1 omega subunit. When a sigma factor is associated with the core the holoenzyme is formed, which can initiate transcription. Mg(2+) serves as cofactor. Zn(2+) is required as a cofactor.

It catalyses the reaction RNA(n) + a ribonucleoside 5'-triphosphate = RNA(n+1) + diphosphate. DNA-dependent RNA polymerase catalyzes the transcription of DNA into RNA using the four ribonucleoside triphosphates as substrates. In Xanthomonas oryzae pv. oryzae (strain MAFF 311018), this protein is DNA-directed RNA polymerase subunit beta'.